The primary structure comprises 157 residues: Transcription antitermination protein NusB (157 aa).

Belongs to the NusB family.

Involved in transcription antitermination. Required for transcription of ribosomal RNA (rRNA) genes. Binds specifically to the boxA antiterminator sequence of the ribosomal RNA (rrn) operons. The sequence is that of Transcription antitermination protein NusB from Xylella fastidiosa (strain Temecula1 / ATCC 700964).